An 83-amino-acid chain; its full sequence is Homeobox protein DLX-2 (83 aa).

Over residues 1 to 14 the composition is skewed to polar residues; that stretch reads STATDSSYYTNQQH. Disordered stretches follow at residues 1–27 and 63–83; these read STATDSSYYTNQQHPAGGGGGGASPYA and PYGTSSSPVNNEPDKEDLEPE.

Belongs to the distal-less homeobox family. Interacts (via homeobox DNA-binding domain) with POU4F2; this interaction enhances retinal ganglion cell (RGC) differentiation.

It is found in the nucleus. Functionally, acts as a transcriptional activator. Activates transcription of CGA/alpha-GSU, via binding to the downstream activin regulatory element (DARE) in the gene promoter. Plays a role in terminal differentiation of interneurons, such as amacrine and bipolar cells in the developing retina. Likely to play a regulatory role in the development of the ventral forebrain. May play a role in craniofacial patterning and morphogenesis. The chain is Homeobox protein DLX-2 (Dlx2) from Rattus norvegicus (Rat).